We begin with the raw amino-acid sequence, 276 residues long: Mitochondrial distribution and morphology protein 12 (276 aa).

Positions 1–276 (MSIDIQWNLL…FVWPSYFTLY (276 aa)) constitute an SMP-LTD domain. Residues 68–104 (TLYSDDSSSLDDEESDREEENMTELPPYGATENGVHK) are disordered. Positions 75–89 (SSLDDEESDREEENM) are enriched in acidic residues.

This sequence belongs to the MDM12 family. In terms of assembly, component of the ER-mitochondria encounter structure (ERMES) or MDM complex, composed of mmm1, mdm10, mdm12 and mdm34. A mmm1 homodimer associates with one molecule of mdm12 on each side in a pairwise head-to-tail manner, and the SMP-LTD domains of mmm1 and mdm12 generate a continuous hydrophobic tunnel for phospholipid trafficking.

The protein resides in the mitochondrion outer membrane. The protein localises to the endoplasmic reticulum membrane. Its function is as follows. Component of the ERMES/MDM complex, which serves as a molecular tether to connect the endoplasmic reticulum (ER) and mitochondria. Components of this complex are involved in the control of mitochondrial shape and protein biogenesis, and function in nonvesicular lipid trafficking between the ER and mitochondria. Mdm12 is required for the interaction of the ER-resident membrane protein mmm1 and the outer mitochondrial membrane-resident beta-barrel protein mdm10. The mdm12-mmm1 subcomplex functions in the major beta-barrel assembly pathway that is responsible for biogenesis of all mitochondrial outer membrane beta-barrel proteins, and acts in a late step after the SAM complex. The mdm10-mdm12-mmm1 subcomplex further acts in the TOM40-specific pathway after the action of the mdm12-mmm1 complex. Essential for establishing and maintaining the structure of mitochondria and maintenance of mtDNA nucleoids. The sequence is that of Mitochondrial distribution and morphology protein 12 from Schizosaccharomyces japonicus (strain yFS275 / FY16936) (Fission yeast).